Reading from the N-terminus, the 122-residue chain is Large ribosomal subunit protein uL14 (122 aa).

This sequence belongs to the universal ribosomal protein uL14 family. Part of the 50S ribosomal subunit. Forms a cluster with proteins L3 and L19. In the 70S ribosome, L14 and L19 interact and together make contacts with the 16S rRNA in bridges B5 and B8.

Its function is as follows. Binds to 23S rRNA. Forms part of two intersubunit bridges in the 70S ribosome. This Lactobacillus gasseri (strain ATCC 33323 / DSM 20243 / BCRC 14619 / CIP 102991 / JCM 1131 / KCTC 3163 / NCIMB 11718 / NCTC 13722 / AM63) protein is Large ribosomal subunit protein uL14.